Consider the following 154-residue polypeptide: Endoribonuclease YbeY (154 aa).

The Zn(2+) site is built by histidine 113, histidine 117, and histidine 123.

The protein belongs to the endoribonuclease YbeY family. Zn(2+) is required as a cofactor.

The protein resides in the cytoplasm. Functionally, single strand-specific metallo-endoribonuclease involved in late-stage 70S ribosome quality control and in maturation of the 3' terminus of the 16S rRNA. The chain is Endoribonuclease YbeY from Verminephrobacter eiseniae (strain EF01-2).